We begin with the raw amino-acid sequence, 346 residues long: 3 beta-hydroxysteroid dehydrogenase/Delta 5--&gt;4-isomerase (346 aa).

The active-site Proton acceptor is the tyrosine 147. An NAD(+)-binding site is contributed by lysine 151.

This sequence belongs to the 3-beta-HSD family.

It carries out the reaction a 3beta-hydroxy-Delta(5)-steroid + NAD(+) = a 3-oxo-Delta(5)-steroid + NADH + H(+). It catalyses the reaction a 3-oxo-Delta(5)-steroid = a 3-oxo-Delta(4)-steroid. The protein operates within lipid metabolism; steroid biosynthesis. In terms of biological role, catalyzes the oxidative conversion of Delta(5)-ene-3-beta-hydroxy steroid, and the oxidative conversion of ketosteroids. The 3-beta-HSD enzymatic system plays a crucial role in the biosynthesis of all classes of hormonal steroids. During viral infection, steroid production contributes to virulence by inhibiting the host inflammatory response. This chain is 3 beta-hydroxysteroid dehydrogenase/Delta 5--&gt;4-isomerase (OPG174), found in Homo sapiens (Human).